The primary structure comprises 485 residues: Acyltransferase cm3D (485 aa).

H169 (proton acceptor) is an active-site residue.

Belongs to the plant acyltransferase family. As to quaternary structure, monomer.

Its pathway is secondary metabolite biosynthesis. Its function is as follows. Acyltransferase; part of the gene cluster that mediates the biosynthesis of beauveriolides I and III, cyclodepsipeptides acting as inhibitors of the acyl-CoA:cholesterol acyltransferase. The HR-PKS cm3B initiates the biosynthesis of beauveriolides by iteratively catalyzing the formation of the linear polyketide chain. The ATP-dependent acetyl-CoA ligase cm3D converts the polyketide carboxylic acid to a CoA thioester which id shuttled to the first T domain in the NRPS cm3A by the acetyltransferase cm3C. Cm3A contains 13 domains and assembles the polyketide chain, L-phenylalanine, L-alanine, and D-leucine (or D-allo-isoleucine) to form beauveriolide I (or beauveriolide III). The production of both beauveriolides I and III suggests the substrate adaptability of cm3B, using different amino acids as substrates. The polypeptide is Acyltransferase cm3D (Cordyceps militaris (strain CM01) (Caterpillar fungus)).